A 306-amino-acid chain; its full sequence is Pyridoxal 5'-phosphate synthase subunit PdxS (306 aa).

Residue Asp-36 coordinates D-ribose 5-phosphate. The Schiff-base intermediate with D-ribose 5-phosphate role is filled by Lys-93. Position 165 (Gly-165) interacts with D-ribose 5-phosphate. Arg-177 lines the D-glyceraldehyde 3-phosphate pocket. Residues Gly-226 and 247-248 each bind D-ribose 5-phosphate; that span reads GS.

This sequence belongs to the PdxS/SNZ family. In terms of assembly, in the presence of PdxT, forms a dodecamer of heterodimers.

The catalysed reaction is aldehydo-D-ribose 5-phosphate + D-glyceraldehyde 3-phosphate + L-glutamine = pyridoxal 5'-phosphate + L-glutamate + phosphate + 3 H2O + H(+). It functions in the pathway cofactor biosynthesis; pyridoxal 5'-phosphate biosynthesis. In terms of biological role, catalyzes the formation of pyridoxal 5'-phosphate from ribose 5-phosphate (RBP), glyceraldehyde 3-phosphate (G3P) and ammonia. The ammonia is provided by the PdxT subunit. Can also use ribulose 5-phosphate and dihydroxyacetone phosphate as substrates, resulting from enzyme-catalyzed isomerization of RBP and G3P, respectively. This chain is Pyridoxal 5'-phosphate synthase subunit PdxS, found in Salinispora tropica (strain ATCC BAA-916 / DSM 44818 / JCM 13857 / NBRC 105044 / CNB-440).